The sequence spans 33 residues: Photosystem II reaction center protein Psb30 (33 aa).

The chain crosses the membrane as a helical span at residues Leu-5–Leu-25.

Belongs to the Psb30/Ycf12 family. In terms of assembly, PSII is composed of 1 copy each of membrane proteins PsbA, PsbB, PsbC, PsbD, PsbE, PsbF, PsbH, PsbI, PsbJ, PsbK, PsbL, PsbM, PsbT, PsbY, PsbZ, Psb30/Ycf12, peripheral proteins of the oxygen-evolving complex and a large number of cofactors. It forms dimeric complexes.

It localises to the plastid. The protein resides in the chloroplast thylakoid membrane. In terms of biological role, a core subunit of photosystem II (PSII), probably helps stabilize the reaction center. The polypeptide is Photosystem II reaction center protein Psb30 (Euglena deses).